Here is a 344-residue protein sequence, read N- to C-terminus: Mycothiol acetyltransferase (344 aa).

A 1D-myo-inositol 2-(L-cysteinylamino)-2-deoxy-alpha-D-glucopyranoside-binding site is contributed by glutamate 36. 2 consecutive N-acetyltransferase domains span residues 40–179 (LALR…TPLP) and 187–344 (VTVR…PSTG). The tract at residues 61 to 83 (ADTSGPNVPDTPGDQNAADTSTM) is disordered. Positions 73-83 (GDQNAADTSTM) are enriched in polar residues. 109–111 (VVV) contributes to the acetyl-CoA binding site. Glutamate 214, lysine 253, and glutamate 272 together coordinate 1D-myo-inositol 2-(L-cysteinylamino)-2-deoxy-alpha-D-glucopyranoside. Acetyl-CoA is bound by residues 276-278 (VGV) and 283-289 (GGAGLGR). A 1D-myo-inositol 2-(L-cysteinylamino)-2-deoxy-alpha-D-glucopyranoside-binding site is contributed by tyrosine 310. 315 to 320 (NVRAVR) contributes to the acetyl-CoA binding site.

The protein belongs to the acetyltransferase family. MshD subfamily. In terms of assembly, monomer.

It carries out the reaction 1D-myo-inositol 2-(L-cysteinylamino)-2-deoxy-alpha-D-glucopyranoside + acetyl-CoA = mycothiol + CoA + H(+). In terms of biological role, catalyzes the transfer of acetyl from acetyl-CoA to desacetylmycothiol (Cys-GlcN-Ins) to form mycothiol. The chain is Mycothiol acetyltransferase from Frankia casuarinae (strain DSM 45818 / CECT 9043 / HFP020203 / CcI3).